A 220-amino-acid polypeptide reads, in one-letter code: Transcriptional regulatory protein SpaR (220 aa).

The Response regulatory domain maps to 3-115 (KILAVDDEKD…ELSARVNAHL (113 aa)). The residue at position 51 (Asp51) is a 4-aspartylphosphate. A DNA-binding region (ompR/PhoB-type) is located at residues 124–220 (QSKRVISGFL…TVWGVGYKWE (97 aa)).

Phosphorylated by SpaK.

The protein localises to the cytoplasm. Functionally, member of the two-component regulatory system SpaK/SpaR involved in the regulation of the biosynthesis of lantibiotic subtilin. SpaR may function as a regulatory protein. This chain is Transcriptional regulatory protein SpaR (spaR), found in Bacillus subtilis.